Reading from the N-terminus, the 222-residue chain is Probable transaldolase (222 aa).

Residue Lys91 is the Schiff-base intermediate with substrate of the active site.

The protein belongs to the transaldolase family. Type 3B subfamily.

The protein resides in the cytoplasm. The catalysed reaction is D-sedoheptulose 7-phosphate + D-glyceraldehyde 3-phosphate = D-erythrose 4-phosphate + beta-D-fructose 6-phosphate. It functions in the pathway carbohydrate degradation; pentose phosphate pathway; D-glyceraldehyde 3-phosphate and beta-D-fructose 6-phosphate from D-ribose 5-phosphate and D-xylulose 5-phosphate (non-oxidative stage): step 2/3. In terms of biological role, transaldolase is important for the balance of metabolites in the pentose-phosphate pathway. The polypeptide is Probable transaldolase (Chlorobium phaeovibrioides (strain DSM 265 / 1930) (Prosthecochloris vibrioformis (strain DSM 265))).